A 535-amino-acid polypeptide reads, in one-letter code: Isoleucine N-monooxygenase 1 (535 aa).

At 1–8 (MGLMPDFL) the chain is on the cytoplasmic side. The chain crosses the membrane as a helical; Signal-anchor for type II membrane protein span at residues 9-29 (SLCHEFPWTFLLVVIFSFMIF). Over 30-535 (KVTKTHLVNK…AAELYRTNEI (506 aa)) the chain is Lumenal. N-linked (GlcNAc...) asparagine glycosylation is found at Asn38, Asn232, and Asn404. Cys470 serves as a coordination point for heme.

Belongs to the cytochrome P450 family. The cofactor is heme. As to expression, exclusively expressed in aerial parts. Highest expression in the apical leaves. Also detected in the second leaf from the top and in the stem. Not expressed in older leaves or roots.

The protein localises to the microsome membrane. It catalyses the reaction L-isoleucine + 2 reduced [NADPH--hemoprotein reductase] + 2 O2 = (1E,2S)-2-methylbutanal oxime + 2 oxidized [NADPH--hemoprotein reductase] + CO2 + 3 H2O + 2 H(+). The catalysed reaction is L-isoleucine + reduced [NADPH--hemoprotein reductase] + O2 = N-hydroxy-L-isoleucine + oxidized [NADPH--hemoprotein reductase] + H2O + 2 H(+). The enzyme catalyses N-hydroxy-L-isoleucine + reduced [NADPH--hemoprotein reductase] + O2 = N,N-dihydroxy-L-isoleucine + oxidized [NADPH--hemoprotein reductase] + H2O + H(+). It carries out the reaction L-valine + 2 reduced [NADPH--hemoprotein reductase] + 2 O2 = (E)-2-methylpropanal oxime + 2 oxidized [NADPH--hemoprotein reductase] + CO2 + 3 H2O + 2 H(+). It catalyses the reaction L-valine + reduced [NADPH--hemoprotein reductase] + O2 = N-hydroxy-L-valine + oxidized [NADPH--hemoprotein reductase] + H2O + 2 H(+). The catalysed reaction is N-hydroxy-L-valine + reduced [NADPH--hemoprotein reductase] + O2 = N,N-dihydroxy-L-valine + oxidized [NADPH--hemoprotein reductase] + H2O + H(+). It functions in the pathway secondary metabolite biosynthesis. Its function is as follows. Involved in the biosynthesis of the cyanogenic glucosides linamarin and lotaustralin and of the nitirle glucosides rhodiocyanoside A and D. Can use L-isoleucine &gt; L-valine as substrate, but not L-leucine, L-phenylalanine or L-tyrosine. Catalyzes multi-step reactions starting with two successive N-hydroxylations using L-isoleucine and, to a lower extent, L-valine as substrates leading to the formation of N,N-dihydroxy-L-valine and N,N-dihydroxy-L-isoleucine, respectively; following spontaneous reactions lead to the production of (E)-2-methylpropanal oxime and (1E,2S)-2-methylbutanal oxime, respectively. The chain is Isoleucine N-monooxygenase 1 from Lotus japonicus (Lotus corniculatus var. japonicus).